We begin with the raw amino-acid sequence, 262 residues long: Hydroxyethylthiazole kinase (262 aa).

Residue Met50 coordinates substrate. Residues Arg125 and Thr171 each coordinate ATP. Gly198 contacts substrate.

The protein belongs to the Thz kinase family. Requires Mg(2+) as cofactor.

It catalyses the reaction 5-(2-hydroxyethyl)-4-methylthiazole + ATP = 4-methyl-5-(2-phosphooxyethyl)-thiazole + ADP + H(+). The protein operates within cofactor biosynthesis; thiamine diphosphate biosynthesis; 4-methyl-5-(2-phosphoethyl)-thiazole from 5-(2-hydroxyethyl)-4-methylthiazole: step 1/1. Functionally, catalyzes the phosphorylation of the hydroxyl group of 4-methyl-5-beta-hydroxyethylthiazole (THZ). This chain is Hydroxyethylthiazole kinase, found in Escherichia coli O139:H28 (strain E24377A / ETEC).